A 583-amino-acid polypeptide reads, in one-letter code: CBP80/20-dependent translation initiation factor (583 aa).

4 disordered regions span residues 42-95, 129-154, 190-251, and 294-325; these read TDKT…PLDM, RQRN…RVEG, RKRN…GYSQ, and SNTD…RPKI. The segment covering 43-53 has biased composition (basic and acidic residues); it reads DKTEGDGESDK. Over residues 54 to 63 the composition is skewed to polar residues; it reads TQSNVSQWTV. 2 stretches are compositionally biased toward basic and acidic residues: residues 65-80 and 141-154; these read CTER…RNRE and IDRD…RVEG. Positions 190 to 199 are enriched in basic residues; the sequence is RKRNDRRKQQ. Low complexity predominate over residues 200–213; that stretch reads KPQGGNKQPPSQQN. Residues 298-324 show a composition bias toward basic and acidic residues; that stretch reads STERHCPPANDSEAKRKESIQSRDRPK. In terms of domain architecture, MIF4G spans 361–562; sequence IEILNSMRNN…LEVIELHANS (202 aa).

Belongs to the CTIF family.

It localises to the cytoplasm. Its subcellular location is the perinuclear region. Its function is as follows. Specifically required for the pioneer round of mRNA translation mediated by the cap-binding complex (CBC), that takes place during or right after mRNA export via the nuclear pore complex (NPC). In contrast, it is not involved in steady state translation, that takes place when the CBC complex is replaced by cytoplasmic cap-binding protein eIF4E. Also required for nonsense-mediated mRNA decay (NMD), the pioneer round of mRNA translation mediated by the cap-binding complex playing a central role in nonsense-mediated mRNA decay (NMD). This is CBP80/20-dependent translation initiation factor (ctif) from Xenopus tropicalis (Western clawed frog).